The chain runs to 211 residues: Mediator-associated protein 2 (211 aa).

Positions Q128–E211 are disordered. Residues S134–S148 are compositionally biased toward low complexity. Position 173 is a phosphoserine (S173). Residues S189–E198 are compositionally biased toward low complexity. Over residues K202–E211 the composition is skewed to basic residues.

As to quaternary structure, associated with the Mediator complex.

It localises to the nucleus. The chain is Mediator-associated protein 2 from Arabidopsis thaliana (Mouse-ear cress).